The following is an 88-amino-acid chain: MLCAIYKSKKKLGSYLYVANREDFSLVPSVLLEHFGKPELVMMFNLLGRKALYNVDCNEVLETIKRQGFYLQIAKQDDGLFNSLSEIK.

The region spanning 1–85 is the YcgL domain; that stretch reads MLCAIYKSKK…QDDGLFNSLS (85 aa).

The chain is YcgL domain-containing protein NTHI1684 from Haemophilus influenzae (strain 86-028NP).